A 337-amino-acid chain; its full sequence is Tetraacyldisaccharide 4'-kinase (337 aa).

55-62 (TAGGNGKT) lines the ATP pocket.

It belongs to the LpxK family.

It catalyses the reaction a lipid A disaccharide + ATP = a lipid IVA + ADP + H(+). It participates in glycolipid biosynthesis; lipid IV(A) biosynthesis; lipid IV(A) from (3R)-3-hydroxytetradecanoyl-[acyl-carrier-protein] and UDP-N-acetyl-alpha-D-glucosamine: step 6/6. In terms of biological role, transfers the gamma-phosphate of ATP to the 4'-position of a tetraacyldisaccharide 1-phosphate intermediate (termed DS-1-P) to form tetraacyldisaccharide 1,4'-bis-phosphate (lipid IVA). The polypeptide is Tetraacyldisaccharide 4'-kinase (Sodalis glossinidius (strain morsitans)).